Here is a 271-residue protein sequence, read N- to C-terminus: 5'-AMP-activated protein kinase subunit beta-2 (271 aa).

The tract at residues 1 to 46 is disordered; that stretch reads MGNTTSERVSGERHGAKAARAEGGGHGPGKEHKIMVGSTDDPSVFS. Ser38 is modified (phosphoserine; by ULK1). Residue Thr39 is modified to Phosphothreonine; by ULK1. Position 68 is a phosphoserine; by ULK1 (Ser68). A phosphoserine mark is found at Ser94 and Ser107. A Phosphothreonine modification is found at Thr147. Ser157, Ser169, Ser173, and Ser183 each carry phosphoserine.

This sequence belongs to the 5'-AMP-activated protein kinase beta subunit family. In terms of assembly, AMPK is a heterotrimer of an alpha catalytic subunit (PRKAA1 or PRKAA2), a beta (PRKAB1 or PRKAB2) and a gamma non-catalytic subunits (PRKAG1, PRKAG2 or PRKAG3). Post-translationally, phosphorylated when associated with the catalytic subunit (PRKAA1 or PRKAA2). Phosphorylated by ULK1 and ULK2; leading to negatively regulate AMPK activity and suggesting the existence of a regulatory feedback loop between ULK1, ULK2 and AMPK.

Non-catalytic subunit of AMP-activated protein kinase (AMPK), an energy sensor protein kinase that plays a key role in regulating cellular energy metabolism. In response to reduction of intracellular ATP levels, AMPK activates energy-producing pathways and inhibits energy-consuming processes: inhibits protein, carbohydrate and lipid biosynthesis, as well as cell growth and proliferation. AMPK acts via direct phosphorylation of metabolic enzymes, and by longer-term effects via phosphorylation of transcription regulators. Also acts as a regulator of cellular polarity by remodeling the actin cytoskeleton; probably by indirectly activating myosin. Beta non-catalytic subunit acts as a scaffold on which the AMPK complex assembles, via its C-terminus that bridges alpha (PRKAA1 or PRKAA2) and gamma subunits (PRKAG1, PRKAG2 or PRKAG3). This Mus musculus (Mouse) protein is 5'-AMP-activated protein kinase subunit beta-2 (Prkab2).